The chain runs to 515 residues: Heavy metal-associated isoprenylated plant protein 41 (515 aa).

The region spanning 376–444 (KQRIVLKMDM…KVCMTTIITV (69 aa)) is the HMA domain. The residue at position 512 (Cys512) is a Cysteine methyl ester. A lipid anchor (S-farnesyl cysteine) is attached at Cys512. The propeptide at 513 to 515 (RIL) is removed in mature form.

The protein belongs to the HIPP family.

In terms of biological role, heavy-metal-binding protein. This chain is Heavy metal-associated isoprenylated plant protein 41, found in Arabidopsis thaliana (Mouse-ear cress).